We begin with the raw amino-acid sequence, 823 residues long: Mitochondrial intermediate peptidase 2 (823 aa).

The transit peptide at 1-33 (MRRLQQSLRRRSARRCPFILIPHRLLTTSYASY) directs the protein to the mitochondrion. Positions 532 to 553 (IDGDGLPEDWDKPYGPGLEADK) are disordered. His595 contacts Zn(2+). Residue Glu596 is part of the active site. Positions 599 and 602 each coordinate Zn(2+).

This sequence belongs to the peptidase M3 family. The cofactor is Zn(2+).

The protein resides in the mitochondrion matrix. The enzyme catalyses Release of an N-terminal octapeptide as second stage of processing of some proteins imported into the mitochondrion.. Cleaves proteins, imported into the mitochondrion, to their mature size. While most mitochondrial precursor proteins are processed to the mature form in one step by mitochondrial processing peptidase (MPP), the sequential cleavage by MIP of an octapeptide after initial processing by MPP is a required step for a subgroup of nuclear-encoded precursor proteins destined for the matrix or the inner membrane. The sequence is that of Mitochondrial intermediate peptidase 2 (OCT2) from Cryptococcus neoformans var. neoformans serotype D (strain B-3501A) (Filobasidiella neoformans).